The following is a 150-amino-acid chain: uncharacterized protein (150 aa).

The next 3 membrane-spanning stretches (helical) occupy residues 48-68, 89-109, and 123-143; these read LFLL…CFLF, VFIF…YLLP, and REVF…IFTL.

This sequence to M.pneumoniae MPN_085 central region.

The protein localises to the cell membrane. This is an uncharacterized protein from Mycoplasma pneumoniae (strain ATCC 29342 / M129 / Subtype 1) (Mycoplasmoides pneumoniae).